Consider the following 229-residue polypeptide: UPF0758 protein Cbei_0490 (229 aa).

The region spanning 107 to 229 is the MPN domain; the sequence is KITSPKDLAS…FVSLKERGLI (123 aa). The Zn(2+) site is built by H178, H180, and D191. Residues 178-191 carry the JAMM motif motif; it reads HNHPSGDPTPSRED.

The protein belongs to the UPF0758 family.

The protein is UPF0758 protein Cbei_0490 of Clostridium beijerinckii (strain ATCC 51743 / NCIMB 8052) (Clostridium acetobutylicum).